Consider the following 299-residue polypeptide: MRKYSQRHIPVMVREVIEFLKPEDEKIILDCTVGEGGHSRAILEHCPGCRIIGIDVDSEVLRIAEEKLKEFSDRASLFKISYREADFLLKTLGVEKVDGILMDLGVSTYQLKGENRGFTFEREEPLDMRMDLESEVTAQKVLNELPEEELARIIFEYGEEKKFARRIARKIVENRPLNTTLDLVKAVREALPSYEIRRRKRHFATKTFQAIRIYVNRELENLKEFLRKAEDLLNPGGRIVVISFHSLEDRIVKETFRNSKKLRILTEKPVRPSEEEIRENPRARSGRLRAAERIEKGGD.

S-adenosyl-L-methionine contacts are provided by residues 36-38, D55, D103, and Q110; that span reads GGH. 2 stretches are compositionally biased toward basic and acidic residues: residues 268 to 282 and 289 to 299; these read KPVR…ENPR and RAAERIEKGGD. Positions 268–299 are disordered; sequence KPVRPSEEEIRENPRARSGRLRAAERIEKGGD.

Belongs to the methyltransferase superfamily. RsmH family.

The protein localises to the cytoplasm. It catalyses the reaction cytidine(1402) in 16S rRNA + S-adenosyl-L-methionine = N(4)-methylcytidine(1402) in 16S rRNA + S-adenosyl-L-homocysteine + H(+). Its function is as follows. Specifically methylates the N4 position of cytidine in position 1402 (C1402) of 16S rRNA. In Thermotoga sp. (strain RQ2), this protein is Ribosomal RNA small subunit methyltransferase H.